Here is a 570-residue protein sequence, read N- to C-terminus: Probable D-xylulose kinase A (570 aa).

Positions 95, 166, 282, and 283 each coordinate substrate. Residues W364, 469 to 470 (GG), and N473 each bind ATP.

It belongs to the FGGY kinase family.

The protein resides in the cytoplasm. It catalyses the reaction D-xylulose + ATP = D-xylulose 5-phosphate + ADP + H(+). In terms of biological role, highly specific D-xylulose kinase which participates in the catabolism of xylose. Xylose is a major component of hemicelluloses such as xylan. Most fungi utilize D-xylose via three enzymatic reactions, xylose reductase (XR), xylitol dehydrogenase (XDH), and xylulokinase, to form xylulose 5-phosphate, which enters pentose phosphate pathway. In Aspergillus niger (strain ATCC MYA-4892 / CBS 513.88 / FGSC A1513), this protein is Probable D-xylulose kinase A (xkiA).